The sequence spans 215 residues: Cytochrome b6 (215 aa).

A helical membrane pass occupies residues 32 to 52 (IFYCFGGIVFTCFLVQVATGF). Cysteine 35 serves as a coordination point for heme c. Heme b is bound by residues histidine 86 and histidine 100. Helical transmembrane passes span 90-110 (ASMM…TGGF), 116-136 (LTWV…VTGY), and 186-206 (AHTF…FLMI). 2 residues coordinate heme b: histidine 187 and histidine 202.

The protein belongs to the cytochrome b family. PetB subfamily. The 4 large subunits of the cytochrome b6-f complex are cytochrome b6, subunit IV (17 kDa polypeptide, PetD), cytochrome f and the Rieske protein, while the 4 small subunits are PetG, PetL, PetM and PetN. The complex functions as a dimer. It depends on heme b as a cofactor. The cofactor is heme c.

It localises to the plastid. Its subcellular location is the chloroplast thylakoid membrane. Component of the cytochrome b6-f complex, which mediates electron transfer between photosystem II (PSII) and photosystem I (PSI), cyclic electron flow around PSI, and state transitions. This is Cytochrome b6 from Skeletonema costatum (Marine centric diatom).